Consider the following 276-residue polypeptide: Large ribosomal subunit protein uL2 (276 aa).

A disordered region spans residues 212–276 (NRHRGIRPQT…KLIISRKKHK (65 aa)). Over residues 257 to 276 (YKTRKKKASDKLIISRKKHK) the composition is skewed to basic residues.

Belongs to the universal ribosomal protein uL2 family. Part of the 50S ribosomal subunit. Forms a bridge to the 30S subunit in the 70S ribosome.

Its function is as follows. One of the primary rRNA binding proteins. Required for association of the 30S and 50S subunits to form the 70S ribosome, for tRNA binding and peptide bond formation. It has been suggested to have peptidyltransferase activity; this is somewhat controversial. Makes several contacts with the 16S rRNA in the 70S ribosome. The protein is Large ribosomal subunit protein uL2 of Helicobacter pylori (strain HPAG1).